A 138-amino-acid polypeptide reads, in one-letter code: Small ribosomal subunit protein uS11c (138 aa).

This sequence belongs to the universal ribosomal protein uS11 family. In terms of assembly, part of the 30S ribosomal subunit.

The protein resides in the plastid. It is found in the chloroplast. The sequence is that of Small ribosomal subunit protein uS11c from Phaseolus vulgaris (Kidney bean).